A 305-amino-acid chain; its full sequence is Target of rapamycin complex subunit LST8-1 (305 aa).

7 WD repeats span residues 1-30 (MSQP…CYRT), 33-71 (YPDS…PQPV), 76-115 (SHTN…CQKE), 117-156 (ESVA…CSCE), 160-199 (EVDT…QTMT), 209-248 (AHNG…LEKV), and 251-292 (GHQR…KVYQ).

The protein belongs to the WD repeat LST8 family. As to quaternary structure, the target of rapamycin complex 1 (TORC1) is composed of at least RAPTOR, LST8 and TOR. Interacts with TOR. Expressed in the root central cylinder, root tips, emerging lateral roots, vasculature of cotyledons, leaf stomata, leaf stipules, anthers, pollen, filaments, and vasculature of petals and sepals.

The protein localises to the endosome. Component of TORC1 complex, which is an essential cell growth regulator that controls plant development. Acts by activating transcription, protein synthesis and ribosome biogenesis, and inhibiting mRNA degradation and autophagy. Involved in regulating amino acid accumulation and the synthesis of myo-inositol and raffinose during plant adaptation to long days. Involved in the regulation of plant growth and abscisic acid (ABA) accumulation. Acts as a positive regulation of the ABA biosynthetic genes ZEP, NCED3 and AAO3, and negative regulator of the ABA catabolic genes CYP707A2 and CYP707A3. The sequence is that of Target of rapamycin complex subunit LST8-1 from Arabidopsis thaliana (Mouse-ear cress).